The primary structure comprises 403 residues: F-box protein At1g60400 (403 aa).

The F-box domain occupies 13 to 59; sequence IDRLSALPEHLLCRILSELSTKDSVRTSVLSKHWRNLWLHVPVLELE.

The protein is F-box protein At1g60400 of Arabidopsis thaliana (Mouse-ear cress).